A 62-amino-acid polypeptide reads, in one-letter code: Arabinogalactan protein 40 (62 aa).

The N-terminal stretch at 1 to 22 is a signal peptide; the sequence is MEMKNIFVALFISAVLVSSVSA. Residues proline 28, proline 30, and proline 32 each carry the 4-hydroxyproline modification. Residues proline 28, proline 30, and proline 32 are each glycosylated (O-linked (Ara...) hydroxyproline). The GPI-anchor amidated serine moiety is linked to residue serine 35. Positions 36–62 are cleaved as a propeptide — removed in mature form; it reads SASTVAFPVVGSIVAASLSAFLALLLQ.

Belongs to the AG-peptide AGP family. Contains 4-hydroxyproline; hydroxylated on Pro-28, Pro-30 and Pro-32. Post-translationally, O-glycosylated on hydroxyprolines; noncontiguous hydroxylproline residues are glycosylated with arabinogalactan.

It is found in the cell membrane. Functionally, proteoglycan that seems to be implicated in diverse developmental roles such as differentiation, cell-cell recognition, embryogenesis and programmed cell death. This is Arabinogalactan protein 40 from Arabidopsis thaliana (Mouse-ear cress).